We begin with the raw amino-acid sequence, 195 residues long: Capsid protein (195 aa).

The disordered stretch occupies residues 148 to 195; that stretch reads NAPILSTLPETTVVRRRGRSPRRRTPSPRRRRSQSPRRRRSASPASQC. Residues 161 to 188 are compositionally biased toward basic residues; that stretch reads VRRRGRSPRRRTPSPRRRRSQSPRRRRS. 3 positions are modified to phosphoserine; by host: serine 167, serine 174, and serine 182. The stretch at 167–172 is one 1; half-length repeat; it reads SPRRRT. Residues 167-188 form a 3 X 7 AA repeats of S-P-R-R-R-[PR]-S region; the sequence is SPRRRTPSPRRRRSQSPRRRRS. The Bipartite nuclear localization signal motif lies at 170 to 187; that stretch reads RRTPSPRRRRSQSPRRRR. 2 consecutive repeat copies span residues 174–180 and 182–188. Positions 189-195 are RNA binding; it reads ASPASQC.

Belongs to the orthohepadnavirus core antigen family. In terms of assembly, homodimerizes, then multimerizes. Interacts with cytosol exposed regions of viral L glycoprotein present in the reticulum-to-Golgi compartment. Interacts with human FLNB. Phosphorylated form interacts with host importin alpha; this interaction depends on the exposure of the NLS, which itself depends upon genome maturation and/or phosphorylation of the capsid protein. Interacts with host NUP153. Phosphorylated by host SRPK1, SRPK2, and maybe protein kinase C or GAPDH. Phosphorylation is critical for pregenomic RNA packaging. Protein kinase C phosphorylation is stimulated by HBx protein and may play a role in transport of the viral genome to the nucleus at the late step during the viral replication cycle.

The protein localises to the virion. The protein resides in the host cytoplasm. Self assembles to form an icosahedral capsid. Most capsids appear to be large particles with an icosahedral symmetry of T=4 and consist of 240 copies of capsid protein, though a fraction forms smaller T=3 particles consisting of 180 capsid proteins. Entering capsids are transported along microtubules to the nucleus. Phosphorylation of the capsid is thought to induce exposure of nuclear localization signal in the C-terminal portion of the capsid protein that allows binding to the nuclear pore complex via the importin (karyopherin-) alpha and beta. Capsids are imported in intact form through the nuclear pore into the nuclear basket, where it probably binds NUP153. Only capsids that contain the mature viral genome can release the viral DNA and capsid protein into the nucleoplasm. Immature capsids get stuck in the basket. Capsids encapsulate the pre-genomic RNA and the P protein. Pre-genomic RNA is reverse-transcribed into DNA while the capsid is still in the cytoplasm. The capsid can then either be directed to the nucleus, providing more genomes for transcription, or bud through the endoplasmic reticulum to provide new virions. This chain is Capsid protein, found in Hepatitis B virus genotype G (isolate United States/USG17/2002) (HBV-G).